Reading from the N-terminus, the 494-residue chain is Peptidyl-prolyl cis-trans isomerase-like 4 (494 aa).

Positions 1 to 172 (MSVLLETSAG…VDIRIKHTVI (172 aa)) constitute a PPIase cyclophilin-type domain. Positions 176–196 (PYPDPAGMREPSASPPPSKAQ) are disordered. Residues 206-240 (EELLDVEASEEAAAEAERRRREREAAAQALTLEMM) adopt a coiled-coil conformation. The RRM domain maps to 253–331 (NVLFVCKLNP…RRIHVDFSQS (79 aa)). Basic and acidic residues-rich tracts occupy residues 391–418 (DLKG…DRST) and 425–494 (PRRD…YRRR). The interval 391–494 (DLKGRHDGDK…NRGRDDYRRR (104 aa)) is disordered.

Belongs to the cyclophilin-type PPIase family. PPIL4 subfamily.

It localises to the nucleus. The enzyme catalyses [protein]-peptidylproline (omega=180) = [protein]-peptidylproline (omega=0). In terms of biological role, PPIases accelerate the folding of proteins. It catalyzes the cis-trans isomerization of proline imidic peptide bonds in oligopeptides. This chain is Peptidyl-prolyl cis-trans isomerase-like 4 (cyp-6), found in Neurospora crassa (strain ATCC 24698 / 74-OR23-1A / CBS 708.71 / DSM 1257 / FGSC 987).